The following is a 176-amino-acid chain: Large ribosomal subunit protein uL6 (176 aa).

Positions 151–170 (RPPEPYKGKGVRYADEQVRR) are enriched in basic and acidic residues. The tract at residues 151 to 176 (RPPEPYKGKGVRYADEQVRRKEAKKK) is disordered.

Belongs to the universal ribosomal protein uL6 family. As to quaternary structure, part of the 50S ribosomal subunit.

Its function is as follows. This protein binds to the 23S rRNA, and is important in its secondary structure. It is located near the subunit interface in the base of the L7/L12 stalk, and near the tRNA binding site of the peptidyltransferase center. This Shewanella pealeana (strain ATCC 700345 / ANG-SQ1) protein is Large ribosomal subunit protein uL6.